Consider the following 610-residue polypeptide: UvrABC system protein C (610 aa).

The region spanning 16-94 (SQPGVYRMYD…IKLYQPRYNV (79 aa)) is the GIY-YIG domain. One can recognise a UVR domain in the interval 204 to 239 (DQVLTQLIARMEKASQDLAFEEAARIRDQIQAVRRV).

The protein belongs to the UvrC family. Interacts with UvrB in an incision complex.

It is found in the cytoplasm. Its function is as follows. The UvrABC repair system catalyzes the recognition and processing of DNA lesions. UvrC both incises the 5' and 3' sides of the lesion. The N-terminal half is responsible for the 3' incision and the C-terminal half is responsible for the 5' incision. The polypeptide is UvrABC system protein C (Salmonella agona (strain SL483)).